Here is a 49-residue protein sequence, read N- to C-terminus: Glycolactin (49 aa).

Belongs to the pancreatic ribonuclease family. Post-translationally, glycosylated. Milk.

It localises to the secreted. Functionally, manifests poly C-specific RNase activity toward yeast tRNA, elicits a dose-dependent inhibition of cell-free translation, inhibits formation of superoxide ions in vitro and inhibits the hemagglutinating activities of soybean lectin and Ricinus communis agglutinin 120. Inhibits HIV-1 reverse transcriptase. The sequence is that of Glycolactin from Bos taurus (Bovine).